Here is a 215-residue protein sequence, read N- to C-terminus: S-crystallin 4 (215 aa).

The GST N-terminal domain maps to 2–80 (PSYTLHYFNH…YLAREFGFHG (79 aa)). The GST C-terminal domain occupies 82 to 215 (NNMDMARVDY…YLQKRSRTEF (134 aa)).

This sequence belongs to the GST superfamily. Lens.

Its function is as follows. S-crystallins are structural components of squids and octopi eye lens. Contains relatively little if any GST activity. This chain is S-crystallin 4, found in Enteroctopus dofleini (North Pacific giant octopus).